The chain runs to 367 residues: WD repeat-containing protein 31 (367 aa).

WD repeat units lie at residues 53 to 90 (AFQE…AYNW), 94 to 132 (NVVK…MWDL), 137 to 175 (QPRQ…LWDV), 179 to 217 (QSVE…LWDS), 221 to 264 (QVAH…LWDL), 269 to 311 (NRIC…IWNQ), and 315 to 353 (ACLF…LLRM).

This is WD repeat-containing protein 31 (WDR31) from Homo sapiens (Human).